A 372-amino-acid chain; its full sequence is Innexin shaking-B (372 aa).

At 1–21 (MLDIFRGLKNLVKVSHVKTDS) the chain is on the cytoplasmic side. A helical transmembrane segment spans residues 22 to 42 (IVFRLHYSITVMILMSFSLII). At 43 to 110 (TTRQYVGNPI…PADKKHYKYY (68 aa)) the chain is on the extracellular side. A helical membrane pass occupies residues 111–131 (QWVCFCLFFQAILFYTPRWLW). Topologically, residues 132 to 182 (KSWEGGKIHALIMDLDIGICSEAEKKQKKKLLLDYLWENLRYHNWWAYRYY) are cytoplasmic. Residues 183-203 (VCELLALINVIGQMFLMNRFF) traverse the membrane as a helical segment. Over 204-267 (DGEFITFGLK…ILPLNVVNEK (64 aa)) the chain is Extracellular. A helical transmembrane segment spans residues 268–288 (IYIFLWFWFILLTFLTLLTLI). Residues 289–372 (YRVVIIFSPR…PGLKGEIQDA (84 aa)) lie on the Cytoplasmic side of the membrane.

It belongs to the pannexin family. As to quaternary structure, monomer (isoform Lethal). In terms of tissue distribution, isoform Neural is expressed in synapses of giant fibers (GF), in a large thoracic cell in location of postsynaptic target and optic lobe lamina and medulla. Isoform Lethal is expressed in embryonic mesodermal derivatives. During metamorphosis, both isoforms are dynamically expressed in pupal nervous system.

It is found in the cell membrane. The protein resides in the cell junction. It localises to the gap junction. In terms of biological role, structural component of the gap junctions at electrical synapses in distal and mid-depth levels in the lamina. Isoform Lethal forms voltage sensitive intercellular channels through homotypic interactions. In Drosophila melanogaster (Fruit fly), this protein is Innexin shaking-B (shakB).